Consider the following 278-residue polypeptide: uncharacterized protein (278 aa).

Residues 127–151 are compositionally biased toward pro residues; that stretch reads PPTPSPPPPPAPTQPTRPTPGPAFF. The disordered stretch occupies residues 127–174; it reads PPTPSPPPPPAPTQPTRPTPGPAFFPQPFKVELHHPTPKTSSLPAPSL. Low complexity predominate over residues 164 to 174; it reads PKTSSLPAPSL.

This is an uncharacterized protein from Botryotinia fuckeliana (Noble rot fungus).